The chain runs to 258 residues: SMH class II histocompatibility antigen, beta-1 chain (258 aa).

Residues 1–29 (MMVLPVPVAPWTAALTVLLMVLNKSVVQG) form the signal peptide. Positions 30–121 (RTTPENYLFR…LNQRLSQSLI (92 aa)) are beta-1. At 30-225 (RTTPENYLFR…RAQSDSARNK (196 aa)) the chain is on the extracellular side. 2 cysteine pairs are disulfide-bonded: Cys-44–Cys-106 and Cys-144–Cys-200. The segment at 122–215 (AQPKVHVSPS…SLDRPITVEW (94 aa)) is beta-2. Residues 124–212 (PKVHVSPSKG…EHPSLDRPIT (89 aa)) enclose the Ig-like C1-type domain. Positions 216–225 (RAQSDSARNK) are connecting peptide. N-linked (GlcNAc...) asparagine glycosylation is present at Asn-224. The helical transmembrane segment at 226–246 (TLTGVGGLVLGLIFLAVGLIM) threads the bilayer. The Cytoplasmic portion of the chain corresponds to 247–258 (HVRSKKAQRGSR).

This sequence belongs to the MHC class II family.

Its subcellular location is the membrane. This chain is SMH class II histocompatibility antigen, beta-1 chain, found in Spalax ehrenbergi (Middle East blind mole rat).